Reading from the N-terminus, the 478-residue chain is Chromosomal replication initiator protein DnaA (478 aa).

Positions 1–71 (MKEFWQTCVS…EALAAEWFQR (71 aa)) are domain I, interacts with DnaA modulators. The tract at residues 71–140 (RPVQVAFELP…DAAGVVYERS (70 aa)) is domain II. The tract at residues 141–357 (RLNTDLTFDN…GALRKVLAYA (217 aa)) is domain III, AAA+ region. ATP-binding residues include Gly185, Gly187, Lys188, and Thr189. Residues 358 to 478 (RFHGRDVLSV…LHVLEQTLKG (121 aa)) are domain IV, binds dsDNA.

It belongs to the DnaA family. Oligomerizes as a right-handed, spiral filament on DNA at oriC.

Its subcellular location is the cytoplasm. Plays an essential role in the initiation and regulation of chromosomal replication. ATP-DnaA binds to the origin of replication (oriC) to initiate formation of the DNA replication initiation complex once per cell cycle. Binds the DnaA box (a 9 base pair repeat at the origin) and separates the double-stranded (ds)DNA. Forms a right-handed helical filament on oriC DNA; dsDNA binds to the exterior of the filament while single-stranded (ss)DNA is stabiized in the filament's interior. The ATP-DnaA-oriC complex binds and stabilizes one strand of the AT-rich DNA unwinding element (DUE), permitting loading of DNA polymerase. After initiation quickly degrades to an ADP-DnaA complex that is not apt for DNA replication. Binds acidic phospholipids. This Bordetella petrii (strain ATCC BAA-461 / DSM 12804 / CCUG 43448) protein is Chromosomal replication initiator protein DnaA.